Consider the following 600-residue polypeptide: UvrABC system protein C (600 aa).

In terms of domain architecture, GIY-YIG spans Glu-15–Val-92. Residues Thr-197–Thr-232 enclose the UVR domain.

Belongs to the UvrC family. As to quaternary structure, interacts with UvrB in an incision complex.

It is found in the cytoplasm. In terms of biological role, the UvrABC repair system catalyzes the recognition and processing of DNA lesions. UvrC both incises the 5' and 3' sides of the lesion. The N-terminal half is responsible for the 3' incision and the C-terminal half is responsible for the 5' incision. This is UvrABC system protein C from Lactobacillus acidophilus (strain ATCC 700396 / NCK56 / N2 / NCFM).